A 295-amino-acid chain; its full sequence is Ribosomal protein L11 methyltransferase (295 aa).

Positions 146, 167, 189, and 231 each coordinate S-adenosyl-L-methionine.

Belongs to the methyltransferase superfamily. PrmA family.

The protein localises to the cytoplasm. The enzyme catalyses L-lysyl-[protein] + 3 S-adenosyl-L-methionine = N(6),N(6),N(6)-trimethyl-L-lysyl-[protein] + 3 S-adenosyl-L-homocysteine + 3 H(+). In terms of biological role, methylates ribosomal protein L11. In Vibrio cholerae serotype O1 (strain M66-2), this protein is Ribosomal protein L11 methyltransferase.